A 262-amino-acid chain; its full sequence is Cytochrome c oxidase subunit 3 (262 aa).

Helical transmembrane passes span Pro16–Phe36, Thr42–Trp59, Gly83–Phe103, Phe128–Ala148, Ser163–Ile183, Phe198–Ile218, and Ala240–Trp260.

Belongs to the cytochrome c oxidase subunit 3 family. In terms of assembly, component of the cytochrome c oxidase (complex IV, CIV), a multisubunit enzyme composed of a catalytic core of 3 subunits and several supernumerary subunits. The complex exists as a monomer or a dimer and forms supercomplexes (SCs) in the inner mitochondrial membrane with ubiquinol-cytochrome c oxidoreductase (cytochrome b-c1 complex, complex III, CIII).

It is found in the mitochondrion inner membrane. The catalysed reaction is 4 Fe(II)-[cytochrome c] + O2 + 8 H(+)(in) = 4 Fe(III)-[cytochrome c] + 2 H2O + 4 H(+)(out). Component of the cytochrome c oxidase, the last enzyme in the mitochondrial electron transport chain which drives oxidative phosphorylation. The respiratory chain contains 3 multisubunit complexes succinate dehydrogenase (complex II, CII), ubiquinol-cytochrome c oxidoreductase (cytochrome b-c1 complex, complex III, CIII) and cytochrome c oxidase (complex IV, CIV), that cooperate to transfer electrons derived from NADH and succinate to molecular oxygen, creating an electrochemical gradient over the inner membrane that drives transmembrane transport and the ATP synthase. Cytochrome c oxidase is the component of the respiratory chain that catalyzes the reduction of oxygen to water. Electrons originating from reduced cytochrome c in the intermembrane space (IMS) are transferred via the dinuclear copper A center (CU(A)) of subunit 2 and heme A of subunit 1 to the active site in subunit 1, a binuclear center (BNC) formed by heme A3 and copper B (CU(B)). The BNC reduces molecular oxygen to 2 water molecules using 4 electrons from cytochrome c in the IMS and 4 protons from the mitochondrial matrix. In Aedes aegypti (Yellowfever mosquito), this protein is Cytochrome c oxidase subunit 3.